The sequence spans 376 residues: Regulatory protein E2 (376 aa).

Positions methionine 1–threonine 206 are transactivation domain. The interval alanine 211–aspartate 271 is disordered. 2 stretches are compositionally biased toward polar residues: residues glycine 218–glutamine 237 and asparagine 246–alanine 266. Positions cysteine 294–valine 376 are DNA-binding domain. Lysine 301 participates in a covalent cross-link: Glycyl lysine isopeptide (Lys-Gly) (interchain with G-Cter in SUMO).

Belongs to the papillomaviridae E2 protein family. In terms of assembly, binds DNA as homodimer. Interacts with protein E1; this interaction greatly increases E1 DNA-binding activity. Interacts with protein L1; this interaction enhances E2-dependent replication and transcription activation. Interacts with protein L2; this interaction inhibits E2 transcriptional activity but not DNA replication function E2. Interacts with protein E7; this interaction inhibits E7 oncogenic activity. Interacts with host TAF1; this interaction modulates E2-dependent transcriptional regulation. Interacts with host BRD4; this interaction mediates E2 transcriptional activation function. Additionally, the interaction with host BRD4 on mitotic chromosomes mediates tethering of the viral genome. Interacts with host TOPBP1; this interaction is required for optimal viral DNA replication. Phosphorylated. Post-translationally, sumoylation plays a regulatory role in E2 transcriptional activity.

Its subcellular location is the host nucleus. Plays a role in the initiation of viral DNA replication. A dimer of E2 interacts with a dimer of E1 in order to improve specificity of E1 DNA binding activity. Once the complex recognizes and binds DNA at specific sites, the E2 dimer is removed from DNA. E2 also regulates viral transcription through binding to the E2RE response element (5'-ACCNNNNNNGGT-3') present in multiple copies in the regulatory regions of the viral genome. Activates or represses transcription depending on E2RE's position with regards to proximal promoter elements including the TATA-box. Repression occurs by sterically hindering the assembly of the transcription initiation complex. The sequence is that of Regulatory protein E2 from Homo sapiens (Human).